A 278-amino-acid chain; its full sequence is Extracellular metalloprotease GLRG_06511 (278 aa).

The N-terminal stretch at 1 to 19 (MQFKSLLVSALAAASTALA) is a signal peptide. A glycan (N-linked (GlcNAc...) asparagine) is linked at Asn51. Residue His190 coordinates Zn(2+). Residue Glu191 is part of the active site. A Zn(2+)-binding site is contributed by His194. A disulfide bridge connects residues Cys227 and Cys254.

The protein belongs to the peptidase M43B family.

Its subcellular location is the secreted. In terms of biological role, secreted metalloproteinase that allows assimilation of proteinaceous substrates. In Colletotrichum graminicola (strain M1.001 / M2 / FGSC 10212) (Maize anthracnose fungus), this protein is Extracellular metalloprotease GLRG_06511.